The chain runs to 156 residues: Cell division protein SepF (156 aa).

The segment covering 20–36 (AQYGYEKEQTDMKKQQD) has biased composition (basic and acidic residues). The segment at 20 to 50 (AQYGYEKEQTDMKKQQDPPEQQDVTFPKAQP) is disordered.

Belongs to the SepF family. In terms of assembly, homodimer. Interacts with FtsZ.

The protein localises to the cytoplasm. Functionally, cell division protein that is part of the divisome complex and is recruited early to the Z-ring. Probably stimulates Z-ring formation, perhaps through the cross-linking of FtsZ protofilaments. Its function overlaps with FtsA. In Bacillus cereus (strain G9842), this protein is Cell division protein SepF.